Here is a 338-residue protein sequence, read N- to C-terminus: Phosphatidylinositol:ceramide inositolphosphotransferase (338 aa).

The Cytoplasmic segment spans residues 1–36; that stretch reads MTSHVTAHDVGGNEDIGTDHVPWYKQPLPLCTQVMR. The helical transmembrane segment at 37–57 threads the bilayer; it reads FILLLLLTVMFLGVAILVANA. At 58–87 the chain is on the extracellular side; it reads RMPDPEKVRPLPDLLLESIPKVALLENGTN. Residues 88-108 form a helical membrane-spanning segment; it reads VIIFLLNATTVVVGFKVFLLE. Topologically, residues 109-116 are cytoplasmic; it reads RHMNGLPR. Residues 117-137 traverse the membrane as a helical segment; the sequence is VTFLVGVPKIGSFLNRMAFGV. Over 138-152 the chain is Extracellular; that stretch reads LDSGRRPFPLKNVFP. Residues 153 to 173 traverse the membrane as a helical segment; that stretch reads IMAIRFLTSYAVVMVFRAFVI. Topologically, residues 174 to 189 are cytoplasmic; it reads MGTSYPATDNHCQNPQ. Residues 190–210 form a helical membrane-spanning segment; that stretch reads VIEHPVLNVILTLVTLGSGAI. Residues 211–222 are Extracellular-facing; sequence HCGDLMFSGHTM. Residue His220 is part of the active site. Residues 223 to 243 traverse the membrane as a helical segment; sequence ILSLAFILAWDYSPFLHPWAV. Residues 244-338 are Cytoplasmic-facing; sequence RVWVSVLLPI…TDASAALPEH (95 aa). Catalysis depends on residues His264 and Asp268.

This sequence belongs to the sphingomyelin synthase family.

The protein localises to the membrane. Its function is as follows. Bidirectional lipid inositolphosphotransferase capable of converting phosphatidylinositol (PI) and ceramide to inositol-phosphorylceramide (IPC) and diacylglycerol (DAG) and vice versa. Direction is dependent on the relative concentrations of DAG and ceramide as phosphoinositol acceptors. Essential for viability of the pathogenic bloodstream stage of this human protozoan parasite and, consequently, can be considered as potential drug target. The protein is Phosphatidylinositol:ceramide inositolphosphotransferase of Leishmania major.